Here is a 333-residue protein sequence, read N- to C-terminus: Small GTPase-like protein LIP2 (333 aa).

The segment at 11–288 (NKEHMVAPLC…YKYNTLPQHN (278 aa)) is small GTPase-like. Residues 29 to 36 (GDSGVGKS), 90 to 94 (DVSGH), and 160 to 163 (NKAD) each bind GTP. The segment covering 242-253 (SPSSAWSLSHAP) has biased composition (polar residues). Residues 242-265 (SPSSAWSLSHAPSQRLDEGTSDED) are disordered.

This sequence belongs to the small GTPase superfamily.

The sequence is that of Small GTPase-like protein LIP2 from Arabidopsis thaliana (Mouse-ear cress).